The following is a 21-amino-acid chain: QPSYDYDEEEDDRAKLRLDAR.

The residue at position 1 (Gln-1) is a Pyrrolidone carboxylic acid. Acidic residues predominate over residues 1–11; it reads QPSYDYDEEED. The tract at residues 1 to 21 is disordered; the sequence is QPSYDYDEEEDDRAKLRLDAR. Residue Tyr-6 is modified to Sulfotyrosine. Residues 12–21 are compositionally biased toward basic and acidic residues; that stretch reads DRAKLRLDAR.

Heterohexamer; disulfide linked. Contains 2 sets of 3 non-identical chains (alpha, beta and gamma). The 2 heterotrimers are in head to head conformation with the N-termini in a small central domain. Post-translationally, conversion of fibrinogen to fibrin is triggered by thrombin, which cleaves fibrinopeptides A and B from alpha and beta chains, and thus exposes the N-terminal polymerization sites responsible for the formation of the soft clot.

The protein localises to the secreted. Functionally, cleaved by the protease thrombin to yield monomers which, together with fibrinogen alpha (FGA) and fibrinogen gamma (FGG), polymerize to form an insoluble fibrin matrix. Fibrin has a major function in hemostasis as one of the primary components of blood clots. In addition, functions during the early stages of wound repair to stabilize the lesion and guide cell migration during re-epithelialization. Was originally thought to be essential for platelet aggregation, based on in vitro studies using anticoagulated blood. However subsequent studies have shown that it is not absolutely required for thrombus formation in vivo. Enhances expression of SELP in activated platelets. Maternal fibrinogen is essential for successful pregnancy. Fibrin deposition is also associated with infection, where it protects against IFNG-mediated hemorrhage. May also facilitate the antibacterial immune response via both innate and T-cell mediated pathways. The chain is Fibrinogen beta chain (FGB) from Antilocapra americana (Pronghorn).